Consider the following 148-residue polypeptide: Endoribonuclease YbeY (148 aa).

Zn(2+) contacts are provided by histidine 113, histidine 117, and histidine 123.

The protein belongs to the endoribonuclease YbeY family. Zn(2+) serves as cofactor.

The protein resides in the cytoplasm. In terms of biological role, single strand-specific metallo-endoribonuclease involved in late-stage 70S ribosome quality control and in maturation of the 3' terminus of the 16S rRNA. The chain is Endoribonuclease YbeY from Borrelia duttonii (strain Ly).